The following is a 209-amino-acid chain: MKLAKLIPKRFFIRSKDRSTVSKSPTAFSFGSASSSSGQDCKNSGGDGGGGSVTPTSILPEVPSPYSYVEILQAFKLIDRDNDGAVSRHDLESLLSRLGPDPLTEEEINVMLKEVDCDGDGTIRLEELASRVVSLDPARDSTELKETFEFFDADRDGLISADELLRVFSTIGDERCTLDDCKRMIADVDEDGDGFVCFTEFSRMMDLQR.

The interval 22 to 59 (SKSPTAFSFGSASSSSGQDCKNSGGDGGGGSVTPTSIL) is disordered. Residues 27–38 (AFSFGSASSSSG) show a composition bias toward low complexity. EF-hand domains lie at 66–101 (YSYV…LGPD), 103–138 (LTEE…LDPA), 139–174 (RDST…IGDE), and 176–209 (CTLD…DLQR). Ca(2+)-binding residues include Asp-79, Asp-81, Asp-83, and Asp-90. Positions 152, 154, 156, 163, 189, 191, 193, and 200 each coordinate Ca(2+).

Functionally, potential calcium sensor. This chain is Probable calcium-binding protein CML36 (CML36), found in Arabidopsis thaliana (Mouse-ear cress).